A 376-amino-acid chain; its full sequence is Acetate kinase (376 aa).

Asparagine 7 is a Mg(2+) binding site. ATP is bound at residue lysine 14. Arginine 71 is a substrate binding site. The Proton donor/acceptor role is filled by aspartate 128. ATP is bound by residues 188–192 (HLGNG), 262–264 (DFR), and 310–314 (GVGEN). Mg(2+) is bound at residue glutamate 364.

The protein belongs to the acetokinase family. Homodimer. It depends on Mg(2+) as a cofactor. Requires Mn(2+) as cofactor.

The protein localises to the cytoplasm. The enzyme catalyses acetate + ATP = acetyl phosphate + ADP. The protein operates within metabolic intermediate biosynthesis; acetyl-CoA biosynthesis; acetyl-CoA from acetate: step 1/2. In terms of biological role, catalyzes the formation of acetyl phosphate from acetate and ATP. Can also catalyze the reverse reaction. This is Acetate kinase from Mycolicibacterium smegmatis (strain ATCC 700084 / mc(2)155) (Mycobacterium smegmatis).